Here is a 145-residue protein sequence, read N- to C-terminus: uncharacterized protein (145 aa).

The first 26 residues, 1-26, serve as a signal peptide directing secretion; the sequence is MAILLPLKSILPWCCITFSFLLSSSG.

This is an uncharacterized protein from Saccharomyces cerevisiae (strain ATCC 204508 / S288c) (Baker's yeast).